The chain runs to 406 residues: Argininosuccinate synthase (406 aa).

Residues 12 to 20 (AYSGGLDTS) and alanine 39 each bind ATP. L-citrulline is bound by residues tyrosine 90 and serine 95. Glycine 120 is an ATP binding site. Residues threonine 122, asparagine 126, and aspartate 127 each coordinate L-aspartate. Residue asparagine 126 coordinates L-citrulline. L-citrulline is bound by residues arginine 130, serine 179, serine 188, glutamate 264, and tyrosine 276.

This sequence belongs to the argininosuccinate synthase family. Type 1 subfamily. Homotetramer.

Its subcellular location is the cytoplasm. It catalyses the reaction L-citrulline + L-aspartate + ATP = 2-(N(omega)-L-arginino)succinate + AMP + diphosphate + H(+). The protein operates within amino-acid biosynthesis; L-arginine biosynthesis; L-arginine from L-ornithine and carbamoyl phosphate: step 2/3. This Geotalea uraniireducens (strain Rf4) (Geobacter uraniireducens) protein is Argininosuccinate synthase.